The sequence spans 120 residues: NAD(P)H-quinone oxidoreductase subunit 3, chloroplastic (120 aa).

The next 3 membrane-spanning stretches (helical) occupy residues 7–27 (YDYF…IFSL), 64–84 (MFAL…PWAM), and 89–109 (FGIS…IGLV).

The protein belongs to the complex I subunit 3 family. In terms of assembly, NDH is composed of at least 16 different subunits, 5 of which are encoded in the nucleus.

The protein resides in the plastid. The protein localises to the chloroplast thylakoid membrane. The enzyme catalyses a plastoquinone + NADH + (n+1) H(+)(in) = a plastoquinol + NAD(+) + n H(+)(out). The catalysed reaction is a plastoquinone + NADPH + (n+1) H(+)(in) = a plastoquinol + NADP(+) + n H(+)(out). Its function is as follows. NDH shuttles electrons from NAD(P)H:plastoquinone, via FMN and iron-sulfur (Fe-S) centers, to quinones in the photosynthetic chain and possibly in a chloroplast respiratory chain. The immediate electron acceptor for the enzyme in this species is believed to be plastoquinone. Couples the redox reaction to proton translocation, and thus conserves the redox energy in a proton gradient. The sequence is that of NAD(P)H-quinone oxidoreductase subunit 3, chloroplastic from Marchantia polymorpha (Common liverwort).